The sequence spans 107 residues: Putative protein RFPL3S (107 aa).

In terms of tissue distribution, strongly expressed in the testis and weakly in brain, placenta and pancreas.

The chain is Putative protein RFPL3S (RFPL3S) from Homo sapiens (Human).